A 43-amino-acid polypeptide reads, in one-letter code: Protein PsbN 1 (43 aa).

A helical membrane pass occupies residues 3-23; sequence TATILGILIAAAVVGITVLAL.

The protein belongs to the PsbN family.

Its subcellular location is the cellular thylakoid membrane. In terms of biological role, may play a role in photosystem I and II biogenesis. This Microcystis aeruginosa (strain NIES-843 / IAM M-2473) protein is Protein PsbN 1.